Consider the following 83-residue polypeptide: Apolipoprotein C-I (83 aa).

The signal sequence occupies residues 1 to 26 (MRLILSLPVLAVVLAMVLEGPAPAQA).

This sequence belongs to the apolipoprotein C1 family.

Its subcellular location is the secreted. In terms of biological role, inhibitor of lipoprotein binding to the low density lipoprotein (LDL) receptor, LDL receptor-related protein, and very low density lipoprotein (VLDL) receptor. Associates with high density lipoproteins (HDL) and the triacylglycerol-rich lipoproteins in the plasma and makes up about 10% of the protein of the VLDL and 2% of that of HDL. Appears to interfere directly with fatty acid uptake and is also the major plasma inhibitor of cholesteryl ester transfer protein (CETP). Binds free fatty acids and reduces their intracellular esterification. Modulates the interaction of APOE with beta-migrating VLDL and inhibits binding of beta-VLDL to the LDL receptor-related protein. The chain is Apolipoprotein C-I (APOC1) from Eonycteris spelaea (Lesser dawn bat).